The primary structure comprises 132 residues: Small ribosomal subunit protein uS8 (132 aa).

This sequence belongs to the universal ribosomal protein uS8 family. Part of the 30S ribosomal subunit. Contacts proteins S5 and S12.

Its function is as follows. One of the primary rRNA binding proteins, it binds directly to 16S rRNA central domain where it helps coordinate assembly of the platform of the 30S subunit. The protein is Small ribosomal subunit protein uS8 of Cereibacter sphaeroides (strain ATCC 17025 / ATH 2.4.3) (Rhodobacter sphaeroides).